Consider the following 188-residue polypeptide: Peptidyl-tRNA hydrolase (188 aa).

Tyr-16 is a tRNA binding site. Residue His-21 is the Proton acceptor of the active site. TRNA-binding residues include Phe-66, Asn-68, and Asn-114.

This sequence belongs to the PTH family. As to quaternary structure, monomer.

It is found in the cytoplasm. It carries out the reaction an N-acyl-L-alpha-aminoacyl-tRNA + H2O = an N-acyl-L-amino acid + a tRNA + H(+). Its function is as follows. Hydrolyzes ribosome-free peptidyl-tRNAs (with 1 or more amino acids incorporated), which drop off the ribosome during protein synthesis, or as a result of ribosome stalling. In terms of biological role, catalyzes the release of premature peptidyl moieties from peptidyl-tRNA molecules trapped in stalled 50S ribosomal subunits, and thus maintains levels of free tRNAs and 50S ribosomes. The protein is Peptidyl-tRNA hydrolase of Citrifermentans bemidjiense (strain ATCC BAA-1014 / DSM 16622 / JCM 12645 / Bem) (Geobacter bemidjiensis).